Reading from the N-terminus, the 61-residue chain is MFSNIGFPGLILILVAVLILFGPKKLPEIGKALGETLKEFKKSTKELTDDAFQEKEKKEKM.

A helical membrane pass occupies residues 1 to 21 (MFSNIGFPGLILILVAVLILF).

The protein belongs to the TatA/E family. Forms a complex with TatC.

It localises to the cell membrane. Part of the twin-arginine translocation (Tat) system that transports large folded proteins containing a characteristic twin-arginine motif in their signal peptide across membranes. TatA could form the protein-conducting channel of the Tat system. This Bacillus anthracis (strain A0248) protein is Sec-independent protein translocase protein TatA.